A 56-amino-acid polypeptide reads, in one-letter code: Prokaryotic ubiquitin-like protein UBact (56 aa).

Residues 1–28 show a composition bias toward basic and acidic residues; the sequence is MPQDQQRKKQFDPNPNRDDSQRKTPVDK. The disordered stretch occupies residues 1–33; sequence MPQDQQRKKQFDPNPNRDDSQRKTPVDKEIDDI. Glutamine 56 is modified (deamidated glutamine). Residue glutamine 56 forms an Isoglutamyl lysine isopeptide (Gln-Lys) (interchain with K-? in acceptor proteins) linkage.

It belongs to the ubiquitin-like protein UBact family. May be modified by deamidation of its C-terminal glutamine to glutamate by the adjacently encoded deamidase. This could be a prerequisite to the subsequent conjugation, as shown in the other prokaryotic ubiquitin-like protein Pup.

May function as a protein modifier covalently attached to lysine residues of substrate proteins. This may serve to target the modified proteins for degradation by proteasomes. The chain is Prokaryotic ubiquitin-like protein UBact from Yanofskybacteria sp. (strain GW2011_GWA1_39_13).